The following is a 184-amino-acid chain: Ribosome-recycling factor (184 aa).

The protein belongs to the RRF family.

The protein resides in the cytoplasm. Responsible for the release of ribosomes from messenger RNA at the termination of protein biosynthesis. May increase the efficiency of translation by recycling ribosomes from one round of translation to another. This chain is Ribosome-recycling factor, found in Stenotrophomonas maltophilia (strain K279a).